The primary structure comprises 207 residues: A-type ATP synthase subunit E (207 aa).

The protein belongs to the V-ATPase E subunit family. As to quaternary structure, has multiple subunits with at least A(3), B(3), C, D, E, F, H, I and proteolipid K(x).

The protein resides in the cell membrane. Functionally, component of the A-type ATP synthase that produces ATP from ADP in the presence of a proton gradient across the membrane. The chain is A-type ATP synthase subunit E from Methanosphaera stadtmanae (strain ATCC 43021 / DSM 3091 / JCM 11832 / MCB-3).